The primary structure comprises 202 residues: Ribonuclease HII (202 aa).

In terms of domain architecture, RNase H type-2 spans 13-202 (KIEAGLDEAG…HFKPKQLDLF (190 aa)). Positions 19, 20, and 112 each coordinate a divalent metal cation.

This sequence belongs to the RNase HII family. Mn(2+) serves as cofactor. The cofactor is Mg(2+).

It localises to the cytoplasm. It carries out the reaction Endonucleolytic cleavage to 5'-phosphomonoester.. Its function is as follows. Endonuclease that specifically degrades the RNA of RNA-DNA hybrids. The sequence is that of Ribonuclease HII from Cytophaga hutchinsonii (strain ATCC 33406 / DSM 1761 / CIP 103989 / NBRC 15051 / NCIMB 9469 / D465).